Consider the following 1404-residue polypeptide: DNA-directed RNA polymerase subunit beta' (1404 aa).

Zn(2+)-binding residues include Cys-70, Cys-72, Cys-85, and Cys-88. Mg(2+) is bound by residues Asp-460, Asp-462, and Asp-464. 4 residues coordinate Zn(2+): Cys-814, Cys-888, Cys-895, and Cys-898.

This sequence belongs to the RNA polymerase beta' chain family. In terms of assembly, the RNAP catalytic core consists of 2 alpha, 1 beta, 1 beta' and 1 omega subunit. When a sigma factor is associated with the core the holoenzyme is formed, which can initiate transcription. Mg(2+) serves as cofactor. Requires Zn(2+) as cofactor.

It carries out the reaction RNA(n) + a ribonucleoside 5'-triphosphate = RNA(n+1) + diphosphate. Functionally, DNA-dependent RNA polymerase catalyzes the transcription of DNA into RNA using the four ribonucleoside triphosphates as substrates. The sequence is that of DNA-directed RNA polymerase subunit beta' from Shewanella pealeana (strain ATCC 700345 / ANG-SQ1).